We begin with the raw amino-acid sequence, 258 residues long: Aspartate/glutamate leucyltransferase (258 aa).

The protein belongs to the R-transferase family. Bpt subfamily.

It localises to the cytoplasm. It catalyses the reaction N-terminal L-glutamyl-[protein] + L-leucyl-tRNA(Leu) = N-terminal L-leucyl-L-glutamyl-[protein] + tRNA(Leu) + H(+). The catalysed reaction is N-terminal L-aspartyl-[protein] + L-leucyl-tRNA(Leu) = N-terminal L-leucyl-L-aspartyl-[protein] + tRNA(Leu) + H(+). Functions in the N-end rule pathway of protein degradation where it conjugates Leu from its aminoacyl-tRNA to the N-termini of proteins containing an N-terminal aspartate or glutamate. The sequence is that of Aspartate/glutamate leucyltransferase from Rhodopseudomonas palustris (strain BisA53).